A 314-amino-acid polypeptide reads, in one-letter code: Glutathione synthetase (314 aa).

In terms of domain architecture, ATP-grasp spans 125-311; the sequence is EKIAAQLFPQ…IAGQLFDAIE (187 aa). Residue 151-208 coordinates ATP; it reads FVQKQEQAILKPLDGMGGHSIFRSSNGDPNLNVILETLTDGGRTLAIAQRYLQQIIEG. Mg(2+)-binding residues include glutamate 282 and asparagine 284.

The protein belongs to the prokaryotic GSH synthase family. Mg(2+) is required as a cofactor. Requires Mn(2+) as cofactor.

It catalyses the reaction gamma-L-glutamyl-L-cysteine + glycine + ATP = glutathione + ADP + phosphate + H(+). It participates in sulfur metabolism; glutathione biosynthesis; glutathione from L-cysteine and L-glutamate: step 2/2. The polypeptide is Glutathione synthetase (Xylella fastidiosa (strain Temecula1 / ATCC 700964)).